Consider the following 930-residue polypeptide: Translation initiation factor IF-2 (930 aa).

The tract at residues 31-317 (FVKSASSTVE…RKSKRAKRAE (287 aa)) is disordered. The span at 61-78 (PAAGASNGAPAKPSAPGA) shows a compositional bias: low complexity. Pro residues-rich tracts occupy residues 79 to 99 (RPGP…PAPA) and 108 to 120 (PAAP…PPAP). Low complexity predominate over residues 121–135 (AASAAPPSAPEAPSA). Composition is skewed to pro residues over residues 136–158 (RPTP…PAPR) and 178–192 (PRPQ…PRPG). A compositionally biased stretch (gly residues) spans 193 to 205 (PGAGGPRPGGGPR). Residues 212–242 (NMPPRPVGGPRPGGGPRPGGGPRPGAGPRPT) show a composition bias toward pro residues. Residues 244-301 (GGAGRPGGGGGGNYRGGGAGGGGGAGGAAAGGFRGRPGGGGGRPGQRGGAAGAFGRPG) show a composition bias toward gly residues. Residues 305–314 (KRGRKSKRAK) are compositionally biased toward basic residues. A tr-type G domain is found at 426 to 598 (FRPPVVTVMG…VVLTADASLD (173 aa)). The segment at 435–442 (GHVDHGKT) is G1. 435–442 (GHVDHGKT) is a binding site for GTP. Positions 460-464 (GITQH) are G2. Residues 485–488 (DTPG) form a G3 region. GTP is bound by residues 485-489 (DTPGH) and 539-542 (NKID). The G4 stretch occupies residues 539 to 542 (NKID). Residues 575 to 577 (SAK) are G5.

Belongs to the TRAFAC class translation factor GTPase superfamily. Classic translation factor GTPase family. IF-2 subfamily.

It is found in the cytoplasm. Functionally, one of the essential components for the initiation of protein synthesis. Protects formylmethionyl-tRNA from spontaneous hydrolysis and promotes its binding to the 30S ribosomal subunits. Also involved in the hydrolysis of GTP during the formation of the 70S ribosomal complex. The sequence is that of Translation initiation factor IF-2 from Mycolicibacterium gilvum (strain PYR-GCK) (Mycobacterium gilvum (strain PYR-GCK)).